A 263-amino-acid chain; its full sequence is Endonuclease 8 (263 aa).

The active-site Schiff-base intermediate with DNA is P2. The active-site Proton donor is E3. Catalysis depends on K53, which acts as the Proton donor; for beta-elimination activity. DNA-binding residues include Q70, R125, and N169. The FPG-type zinc-finger motif lies at 229–263 (KVFHRDGEPCERCGGIIEKTTLSSRPFYWCPGCQH). R253 (proton donor; for delta-elimination activity) is an active-site residue.

Belongs to the FPG family. It depends on Zn(2+) as a cofactor.

The enzyme catalyses 2'-deoxyribonucleotide-(2'-deoxyribose 5'-phosphate)-2'-deoxyribonucleotide-DNA = a 3'-end 2'-deoxyribonucleotide-(2,3-dehydro-2,3-deoxyribose 5'-phosphate)-DNA + a 5'-end 5'-phospho-2'-deoxyribonucleoside-DNA + H(+). Involved in base excision repair of DNA damaged by oxidation or by mutagenic agents. Acts as a DNA glycosylase that recognizes and removes damaged bases. Has a preference for oxidized pyrimidines, such as thymine glycol, 5,6-dihydrouracil and 5,6-dihydrothymine. Has AP (apurinic/apyrimidinic) lyase activity and introduces nicks in the DNA strand. Cleaves the DNA backbone by beta-delta elimination to generate a single-strand break at the site of the removed base with both 3'- and 5'-phosphates. The polypeptide is Endonuclease 8 (Escherichia coli O6:K15:H31 (strain 536 / UPEC)).